The sequence spans 225 residues: UPF0173 metal-dependent hydrolase Pcal_1074 (225 aa).

The protein belongs to the UPF0173 family.

The polypeptide is UPF0173 metal-dependent hydrolase Pcal_1074 (Pyrobaculum calidifontis (strain DSM 21063 / JCM 11548 / VA1)).